A 146-amino-acid chain; its full sequence is MNPAHLLILAAVCVSSLGASSNRPMPLNLYQFKNMIQCTVPSRSWWDFADYGCYCGRGGSGTPVDDLDRCCQVHDNCYNEAEKISGCWPYFKTYSYECSQGTLTCKGGNNACAAAVCDCDRLAAICFAGAPYNNNNYNIDLKARCQ.

The first 21 residues, 1 to 21 (MNPAHLLILAAVCVSSLGASS), serve as a signal peptide directing secretion. Residues 22-27 (NRPMPL) constitute a propeptide that is removed on maturation. 7 disulfides stabilise this stretch: Cys-38–Cys-98, Cys-53–Cys-145, Cys-55–Cys-71, Cys-70–Cys-126, Cys-77–Cys-119, Cys-87–Cys-112, and Cys-105–Cys-117. Ca(2+) contacts are provided by Tyr-54, Gly-56, and Gly-58. His-74 is an active-site residue. Asp-75 serves as a coordination point for Ca(2+). The active site involves Asp-120.

Belongs to the phospholipase A2 family. Group I subfamily. D49 sub-subfamily. Requires Ca(2+) as cofactor. In terms of tissue distribution, expressed by the venom gland.

It localises to the secreted. It catalyses the reaction a 1,2-diacyl-sn-glycero-3-phosphocholine + H2O = a 1-acyl-sn-glycero-3-phosphocholine + a fatty acid + H(+). In terms of biological role, PLA2 catalyzes the calcium-dependent hydrolysis of the 2-acyl groups in 3-sn-phosphoglycerides. The sequence is that of Acidic phospholipase A2 2 from Naja kaouthia (Monocled cobra).